The primary structure comprises 1004 residues: Liprin-beta homolog (1004 aa).

2 stretches are compositionally biased toward low complexity: residues 50–63 and 149–161; these read NGNSTSRSTTTIGS and SPPSDLPTSSSSL. Disordered stretches follow at residues 50 to 122 and 135 to 161; these read NGNS…RSSR and HRTDLGSDGSSGVESPPSDLPTSSSSL. 2 coiled-coil regions span residues 280–328 and 364–396; these read CQEL…VNQS and DEMSQLRTAVQRLMADNEHKSLQINTLRNALDE. 4 disordered regions span residues 341 to 366, 432 to 497, 528 to 550, and 648 to 686; these read HTNGHSSGGYMSPLREHRSEKNDDEM, PSDS…GGNQ, NGNEGANHNYSSASLPRGVGKAS, and FSKLTRSTSQDQSNSFRRGSAARSTSTARLGSTNHLGTV. Residues 434–453 are compositionally biased toward polar residues; the sequence is DSMSHSTSFPVSLSSTTSNG. Over residues 458–474 the composition is skewed to low complexity; sequence STVQSSSSYNSSLSAVS. Composition is skewed to polar residues over residues 531–541 and 648–684; these read EGANHNYSSAS and FSKLTRSTSQDQSNSFRRGSAARSTSTARLGSTNHLG. SAM domains lie at 698 to 762, 770 to 833, and 858 to 930; these read WRSE…IEED, WDVH…LKKA, and VVRW…LLGP.

This sequence belongs to the liprin family. Liprin-beta subfamily. In terms of tissue distribution, expressed in pharyngeal muscle, particularly posterior bulb, adjacent to the dorsal and ventral cord (but not in ventral cord neurons), and in body wall muscles.

In terms of biological role, involved in the regulation of synaptic function at neuromuscular junctions. Together with the liprin-alpha protein syd-2, may play a role in regulating the structure of the neuronal region, called the active zone, from which synaptic vesicles send neurotransmitter signals across the synapse. Does not seem to be required for neuronal development. May regulate the disassembly of focal adhesions. Does not bind receptor-like tyrosine phosphatases type 2A. This is Liprin-beta homolog from Caenorhabditis elegans.